Reading from the N-terminus, the 1175-residue chain is DNA-directed RNA polymerase subunit beta (1175 aa).

The tract at residues 1–24 (MEGSLLVASSASNNETANNVESTD) is disordered. Over residues 7-23 (VASSASNNETANNVEST) the composition is skewed to low complexity.

Belongs to the RNA polymerase beta chain family. The RNAP catalytic core consists of 2 alpha, 1 beta, 1 beta' and 1 omega subunit. When a sigma factor is associated with the core the holoenzyme is formed, which can initiate transcription.

It carries out the reaction RNA(n) + a ribonucleoside 5'-triphosphate = RNA(n+1) + diphosphate. DNA-dependent RNA polymerase catalyzes the transcription of DNA into RNA using the four ribonucleoside triphosphates as substrates. This Renibacterium salmoninarum (strain ATCC 33209 / DSM 20767 / JCM 11484 / NBRC 15589 / NCIMB 2235) protein is DNA-directed RNA polymerase subunit beta.